We begin with the raw amino-acid sequence, 119 residues long: Large ribosomal subunit protein uL24 (119 aa).

Belongs to the universal ribosomal protein uL24 family. Part of the 50S ribosomal subunit.

Its function is as follows. One of two assembly initiator proteins, it binds directly to the 5'-end of the 23S rRNA, where it nucleates assembly of the 50S subunit. One of the proteins that surrounds the polypeptide exit tunnel on the outside of the subunit. The sequence is that of Large ribosomal subunit protein uL24 from Paenarthrobacter aurescens (strain TC1).